The chain runs to 210 residues: Large ribosomal subunit protein uL4 (210 aa).

Polar residues predominate over residues 41–52 (QTNARQGTASTK). A disordered region spans residues 41–71 (QTNARQGTASTKTRAEVRGGGRKPWRQKGTG). Residues 60 to 71 (GGRKPWRQKGTG) show a composition bias toward basic residues.

The protein belongs to the universal ribosomal protein uL4 family. As to quaternary structure, part of the 50S ribosomal subunit.

Its function is as follows. One of the primary rRNA binding proteins, this protein initially binds near the 5'-end of the 23S rRNA. It is important during the early stages of 50S assembly. It makes multiple contacts with different domains of the 23S rRNA in the assembled 50S subunit and ribosome. Forms part of the polypeptide exit tunnel. The polypeptide is Large ribosomal subunit protein uL4 (Trichormus variabilis (strain ATCC 29413 / PCC 7937) (Anabaena variabilis)).